We begin with the raw amino-acid sequence, 175 residues long: MARKNQKAPWEPEEEIIWVSKSEMKRDMEELQKLGEELVGLKPAVLEKFPLSEDLREAIADAQRFKNEARRRQLQRIGKLMRYEDPEPIQAALDKVRNKHSQATAALHKLEMLRDRVVEEGDKAIDDVMELYPEADRQRLRQLARQAAKEKKAGKPAKSYREIFQILKALNEEEI.

It belongs to the DarP family.

It is found in the cytoplasm. Member of a network of 50S ribosomal subunit biogenesis factors which assembles along the 30S-50S interface, preventing incorrect 23S rRNA structures from forming. Promotes peptidyl transferase center (PTC) maturation. This Vibrio parahaemolyticus serotype O3:K6 (strain RIMD 2210633) protein is Dual-action ribosomal maturation protein DarP.